The primary structure comprises 220 residues: Adenylate kinase (220 aa).

10–15 (GAGKGT) contributes to the ATP binding site. The NMP stretch occupies residues 30–59 (STGDMLRAAVKAGTPLGVEAKGYMDAGKLV). AMP-binding positions include threonine 31, arginine 36, 57–59 (KLV), 85–88 (GFPR), and glutamine 92. The LID stretch occupies residues 122-159 (GRRTHPASGRTYHVKFNPPKVEGHDDVTGEPLIQRDDD). ATP is bound by residues arginine 123 and 132–133 (TY). Residues arginine 156 and arginine 167 each contribute to the AMP site. Glycine 206 contacts ATP.

The protein belongs to the adenylate kinase family. In terms of assembly, monomer.

It localises to the cytoplasm. It catalyses the reaction AMP + ATP = 2 ADP. The protein operates within purine metabolism; AMP biosynthesis via salvage pathway; AMP from ADP: step 1/1. Functionally, catalyzes the reversible transfer of the terminal phosphate group between ATP and AMP. Plays an important role in cellular energy homeostasis and in adenine nucleotide metabolism. The polypeptide is Adenylate kinase (Burkholderia cenocepacia (strain HI2424)).